Reading from the N-terminus, the 194-residue chain is FMN-dependent NADH:quinone oxidoreductase 1 (194 aa).

FMN contacts are provided by residues Ser-9 and 85 to 88 (MYNF).

This sequence belongs to the azoreductase type 1 family. Homodimer. FMN is required as a cofactor.

It carries out the reaction 2 a quinone + NADH + H(+) = 2 a 1,4-benzosemiquinone + NAD(+). It catalyses the reaction N,N-dimethyl-1,4-phenylenediamine + anthranilate + 2 NAD(+) = 2-(4-dimethylaminophenyl)diazenylbenzoate + 2 NADH + 2 H(+). In terms of biological role, quinone reductase that provides resistance to thiol-specific stress caused by electrophilic quinones. Its function is as follows. Also exhibits azoreductase activity. Catalyzes the reductive cleavage of the azo bond in aromatic azo compounds to the corresponding amines. The protein is FMN-dependent NADH:quinone oxidoreductase 1 of Xanthomonas euvesicatoria pv. vesicatoria (strain 85-10) (Xanthomonas campestris pv. vesicatoria).